The chain runs to 235 residues: Nitrile hydratase subunit beta (235 aa).

It belongs to the nitrile hydratase subunit beta family. Heterodimer of an alpha and a beta chain.

It catalyses the reaction an aliphatic primary amide = an aliphatic nitrile + H2O. In terms of biological role, NHase catalyzes the hydration of various nitrile compounds to the corresponding amides. This is Nitrile hydratase subunit beta (nthB) from Rhodococcus sp.